The primary structure comprises 156 residues: ATP synthase subunit b (156 aa).

The helical transmembrane segment at 11 to 31 (AIAFVLFVIFCMKYVWPPIMA) threads the bilayer.

The protein belongs to the ATPase B chain family. In terms of assembly, F-type ATPases have 2 components, F(1) - the catalytic core - and F(0) - the membrane proton channel. F(1) has five subunits: alpha(3), beta(3), gamma(1), delta(1), epsilon(1). F(0) has three main subunits: a(1), b(2) and c(10-14). The alpha and beta chains form an alternating ring which encloses part of the gamma chain. F(1) is attached to F(0) by a central stalk formed by the gamma and epsilon chains, while a peripheral stalk is formed by the delta and b chains.

It localises to the cell inner membrane. In terms of biological role, f(1)F(0) ATP synthase produces ATP from ADP in the presence of a proton or sodium gradient. F-type ATPases consist of two structural domains, F(1) containing the extramembraneous catalytic core and F(0) containing the membrane proton channel, linked together by a central stalk and a peripheral stalk. During catalysis, ATP synthesis in the catalytic domain of F(1) is coupled via a rotary mechanism of the central stalk subunits to proton translocation. Functionally, component of the F(0) channel, it forms part of the peripheral stalk, linking F(1) to F(0). The protein is ATP synthase subunit b of Yersinia pseudotuberculosis serotype O:1b (strain IP 31758).